A 139-amino-acid chain; its full sequence is Small ribosomal subunit protein bS6 (139 aa).

Over residues 114–133 (KKEPREPRAPREPRVEKVDE) the composition is skewed to basic and acidic residues. Residues 114–139 (KKEPREPRAPREPRVEKVDEQTFTEE) are disordered.

This sequence belongs to the bacterial ribosomal protein bS6 family.

Binds together with bS18 to 16S ribosomal RNA. This Campylobacter concisus (strain 13826) protein is Small ribosomal subunit protein bS6.